Reading from the N-terminus, the 211-residue chain is tRNA (guanine-N(7)-)-methyltransferase (211 aa).

S-adenosyl-L-methionine is bound by residues glutamate 44, aspartate 69, aspartate 96, and aspartate 118. Residue aspartate 118 is part of the active site. A substrate-binding site is contributed by lysine 122. Residues 124-129 (KHEKRR) are interaction with RNA. Residues aspartate 154 and 191 to 194 (TEYE) each bind substrate.

The protein belongs to the class I-like SAM-binding methyltransferase superfamily. TrmB family.

It catalyses the reaction guanosine(46) in tRNA + S-adenosyl-L-methionine = N(7)-methylguanosine(46) in tRNA + S-adenosyl-L-homocysteine. It participates in tRNA modification; N(7)-methylguanine-tRNA biosynthesis. In terms of biological role, catalyzes the formation of N(7)-methylguanine at position 46 (m7G46) in tRNA. The protein is tRNA (guanine-N(7)-)-methyltransferase of Streptococcus uberis (strain ATCC BAA-854 / 0140J).